Reading from the N-terminus, the 200-residue chain is MKSFLFCCLLGTFLAIGMCLECEVCMQPGKRCNGSMMTCKDNEDTCVMFQTEVIRAPLSFTFTSKMCSTSDTCHLDYVETNLPYELAVRSRRACCVGDECKTMPPVVLEHHDNRYNGLHCPGCIGFGSHECNEKLVSCRDTENQCLSLIGKNFDFVADDITIKGCATESLCSLLQKKIFSAIGEFDLDVKCTPVFPQSSQ.

The N-terminal stretch at 1-19 (MKSFLFCCLLGTFLAIGMC) is a signal peptide. Disulfide bonds link C22/C46, C25/C32, C39/C67, C73/C94, C95/C100, C120/C145, C138/C165, and C171/C191. An N-linked (GlcNAc...) asparagine glycan is attached at N33.

It belongs to the CNF-like-inhibitor family. In terms of assembly, heterodimer of subunit A and subunit B. Expressed by the liver.

It is found in the secreted. Its function is as follows. Inhibits the enzymatic activity of phospholipase A2 (PA2). This chain is Phospholipase A2 inhibitor gamma subunit B, found in Gloydius brevicaudus siniticus (Chinese mamushi).